The primary structure comprises 226 residues: uncharacterized protein (226 aa).

A helical membrane pass occupies residues 5–25 (IKTVSFAAAAILVVIICTFLI).

Its subcellular location is the cell membrane. This is an uncharacterized protein from Bacillus subtilis (strain 168).